The chain runs to 375 residues: UDP-N-acetylglucosamine--N-acetylmuramyl-(pentapeptide) pyrophosphoryl-undecaprenol N-acetylglucosamine transferase (375 aa).

UDP-N-acetyl-alpha-D-glucosamine-binding positions include 15–17 (TGG), N126, R169, S197, and Q298.

It belongs to the glycosyltransferase 28 family. MurG subfamily.

Its subcellular location is the cell inner membrane. It carries out the reaction di-trans,octa-cis-undecaprenyl diphospho-N-acetyl-alpha-D-muramoyl-L-alanyl-D-glutamyl-meso-2,6-diaminopimeloyl-D-alanyl-D-alanine + UDP-N-acetyl-alpha-D-glucosamine = di-trans,octa-cis-undecaprenyl diphospho-[N-acetyl-alpha-D-glucosaminyl-(1-&gt;4)]-N-acetyl-alpha-D-muramoyl-L-alanyl-D-glutamyl-meso-2,6-diaminopimeloyl-D-alanyl-D-alanine + UDP + H(+). The protein operates within cell wall biogenesis; peptidoglycan biosynthesis. In terms of biological role, cell wall formation. Catalyzes the transfer of a GlcNAc subunit on undecaprenyl-pyrophosphoryl-MurNAc-pentapeptide (lipid intermediate I) to form undecaprenyl-pyrophosphoryl-MurNAc-(pentapeptide)GlcNAc (lipid intermediate II). The sequence is that of UDP-N-acetylglucosamine--N-acetylmuramyl-(pentapeptide) pyrophosphoryl-undecaprenol N-acetylglucosamine transferase from Rhodopseudomonas palustris (strain BisB18).